Consider the following 158-residue polypeptide: Transcriptional repressor NrdR (158 aa).

Residues 3-34 (CPSCQNTDSRVLESRAADGGRSVRRRRECLNC) fold into a zinc finger. The region spanning 49–139 (ITVIKRDGCR…VYRQFRGIDD (91 aa)) is the ATP-cone domain.

This sequence belongs to the NrdR family. Requires Zn(2+) as cofactor.

Functionally, negatively regulates transcription of bacterial ribonucleotide reductase nrd genes and operons by binding to NrdR-boxes. The protein is Transcriptional repressor NrdR of Synechococcus sp. (strain CC9902).